The chain runs to 256 residues: Triosephosphate isomerase (256 aa).

Position 9–11 (9–11) interacts with substrate; the sequence is NWK. H94 (electrophile) is an active-site residue. E166 acts as the Proton acceptor in catalysis. Substrate-binding positions include G172, S211, and 232–233; that span reads GG.

Belongs to the triosephosphate isomerase family. In terms of assembly, homodimer.

It localises to the cytoplasm. It carries out the reaction D-glyceraldehyde 3-phosphate = dihydroxyacetone phosphate. It participates in carbohydrate biosynthesis; gluconeogenesis. The protein operates within carbohydrate degradation; glycolysis; D-glyceraldehyde 3-phosphate from glycerone phosphate: step 1/1. Functionally, involved in the gluconeogenesis. Catalyzes stereospecifically the conversion of dihydroxyacetone phosphate (DHAP) to D-glyceraldehyde-3-phosphate (G3P). In Natranaerobius thermophilus (strain ATCC BAA-1301 / DSM 18059 / JW/NM-WN-LF), this protein is Triosephosphate isomerase.